Reading from the N-terminus, the 500-residue chain is Cytochrome P450 11B3, mitochondrial (500 aa).

The N-terminal 24 residues, 1 to 24, are a transit peptide targeting the mitochondrion; the sequence is MALRVTADVWLARPWQCLHRTRAL. Cys-447 contributes to the heme binding site.

It belongs to the cytochrome P450 family. Requires heme as cofactor. Expressed in the adrenal cortex and in different brain tissues, including hippocampus, hypothalamus, cerebellum, cerebral cortex, and midbrain.

The protein resides in the mitochondrion membrane. The enzyme catalyses a steroid + 2 reduced [adrenodoxin] + O2 + 2 H(+) = an 11beta-hydroxysteroid + 2 oxidized [adrenodoxin] + H2O. It catalyses the reaction 21-hydroxyprogesterone + 2 reduced [adrenodoxin] + O2 + 2 H(+) = corticosterone + 2 oxidized [adrenodoxin] + H2O. The catalysed reaction is 21-hydroxyprogesterone + 2 reduced [adrenodoxin] + O2 + 2 H(+) = 18-hydroxy-11-deoxycorticosterone + 2 oxidized [adrenodoxin] + H2O. It carries out the reaction 21-hydroxyprogesterone + 2 reduced [adrenodoxin] + O2 + 2 H(+) = 19-hydroxy-11-deoxycorticosterone + 2 oxidized [adrenodoxin] + H2O. A cytochrome P450 monooxygenase involved in the biosynthesis of adrenal corticoids. Catalyzes the hydroxylation of steroids at 11beta, 18- or 19-positions, with preferred regioselectivity at 11beta and 18. Converts 11-deoxycorticosterone into corticosterone, 18-hydroxy-11-deoxycorticosterone, and/or 19-hydroxy-11-deoxycorticosterone, but not to 18-hydroxycorticosterone or aldosterone. Mechanistically, uses molecular oxygen inserting one oxygen atom into a substrate for hydroxylation and reducing the second into a water molecule. Two electrons are provided by NADPH via a two-protein mitochondrial transfer system comprising flavoprotein FDXR (adrenodoxin/ferredoxin reductase) and nonheme iron-sulfur protein FDX1 or FDX2 (adrenodoxin/ferredoxin). This is Cytochrome P450 11B3, mitochondrial (Cyp11b3) from Rattus norvegicus (Rat).